The chain runs to 149 residues: 3-hydroxyacyl-[acyl-carrier-protein] dehydratase FabZ (149 aa).

Residue His-49 is part of the active site.

Belongs to the thioester dehydratase family. FabZ subfamily.

It is found in the cytoplasm. It catalyses the reaction a (3R)-hydroxyacyl-[ACP] = a (2E)-enoyl-[ACP] + H2O. Functionally, involved in unsaturated fatty acids biosynthesis. Catalyzes the dehydration of short chain beta-hydroxyacyl-ACPs and long chain saturated and unsaturated beta-hydroxyacyl-ACPs. This is 3-hydroxyacyl-[acyl-carrier-protein] dehydratase FabZ from Sulfurovum sp. (strain NBC37-1).